The following is a 388-amino-acid chain: Probable proton-coupled zinc antiporter SLC30A3 (388 aa).

Residues 1-13 show a composition bias toward polar residues; the sequence is MEPSPTTGGSETT. Disordered stretches follow at residues 1 to 30 and 35 to 54; these read MEPSPTTGGSETTRLVGPRDRGGAGGGLRL and TEAPEPLPEEPKPVEMSFHH. The Cytoplasmic portion of the chain corresponds to 1–75; sequence MEPSPTTGGS…TPERMQAQRQ (75 aa). The chain crosses the membrane as a helical span at residues 76–96; sequence LCTACAVCCVFMAGEVVGGYL. Over 97–105 the chain is Lumenal; it reads AHSLAIMTD. A helical transmembrane segment spans residues 106 to 126; it reads AAHLLADVGSMMGSLFSLWLS. Histidine 108 and aspartate 112 together coordinate Zn(2+). Residues 127–145 lie on the Cytoplasmic side of the membrane; sequence TRPATRTMTFGWHRSETLG. Residues 146-166 form a helical membrane-spanning segment; the sequence is ALASVVSLWMVTGILLYLAFI. Residues 167 to 177 lie on the Lumenal side of the membrane; the sequence is RLLHSDYHIEG. A helical transmembrane segment spans residues 178 to 198; it reads GAMLLTASIAVCANLLMAFVL. The Cytoplasmic segment spans residues 199–235; it reads HQAGPPHSHGSRGAEYAPLEEGSGEPLPLGNTSVRAA. The helical transmembrane segment at 236–256 threads the bilayer; that stretch reads FVHVLGDLLQSLGVLIASILI. Zn(2+)-binding residues include histidine 238 and aspartate 242. The Lumenal segment spans residues 257-264; it reads YFKPQYKA. The chain crosses the membrane as a helical span at residues 265 to 285; that stretch reads ADPISTFLFSICALGSTAPTL. The Cytoplasmic segment spans residues 286–388; that stretch reads RDVLRVLMEG…CLRCQEPPQA (103 aa).

This sequence belongs to the cation diffusion facilitator (CDF) transporter (TC 2.A.4) family. SLC30A subfamily. In terms of assembly, homodimer. Homodimerization could regulate efficiency of zinc transport. Interacts with TMEM163.

It is found in the cytoplasmic vesicle. Its subcellular location is the secretory vesicle. The protein localises to the synaptic vesicle membrane. The protein resides in the synapse. It localises to the synaptosome. It is found in the late endosome membrane. Its subcellular location is the lysosome membrane. It carries out the reaction Zn(2+)(in) + 2 H(+)(out) = Zn(2+)(out) + 2 H(+)(in). Functionally, probable proton-coupled zinc ion antiporter mediating the import of zinc from cytoplasm into synaptic vesicles and participating to cellular zinc ion homeostasis in the brain. This chain is Probable proton-coupled zinc antiporter SLC30A3, found in Bos taurus (Bovine).